Here is a 170-residue protein sequence, read N- to C-terminus: ATP synthase subunit b (170 aa).

The chain crosses the membrane as a helical span at residues 20 to 42; it reads QLLAMLVLLALLKKFALGPLLNI.

It belongs to the ATPase B chain family. In terms of assembly, F-type ATPases have 2 components, F(1) - the catalytic core - and F(0) - the membrane proton channel. F(1) has five subunits: alpha(3), beta(3), gamma(1), delta(1), epsilon(1). F(0) has three main subunits: a(1), b(2) and c(10-14). The alpha and beta chains form an alternating ring which encloses part of the gamma chain. F(1) is attached to F(0) by a central stalk formed by the gamma and epsilon chains, while a peripheral stalk is formed by the delta and b chains.

Its subcellular location is the cell membrane. F(1)F(0) ATP synthase produces ATP from ADP in the presence of a proton or sodium gradient. F-type ATPases consist of two structural domains, F(1) containing the extramembraneous catalytic core and F(0) containing the membrane proton channel, linked together by a central stalk and a peripheral stalk. During catalysis, ATP synthesis in the catalytic domain of F(1) is coupled via a rotary mechanism of the central stalk subunits to proton translocation. Functionally, component of the F(0) channel, it forms part of the peripheral stalk, linking F(1) to F(0). This Bacillus velezensis (strain DSM 23117 / BGSC 10A6 / LMG 26770 / FZB42) (Bacillus amyloliquefaciens subsp. plantarum) protein is ATP synthase subunit b.